A 379-amino-acid polypeptide reads, in one-letter code: Spermidine/putrescine import ATP-binding protein PotA (379 aa).

In terms of domain architecture, ABC transporter spans 10 to 240 (VTIDQVSKAY…PATDFVAKFI (231 aa)). Position 42–49 (42–49 (GPSGCGKT)) interacts with ATP.

Belongs to the ABC transporter superfamily. Spermidine/putrescine importer (TC 3.A.1.11.1) family. The complex is composed of two ATP-binding proteins (PotA), two transmembrane proteins (PotB and PotC) and a solute-binding protein (PotD).

It is found in the cell inner membrane. It catalyses the reaction ATP + H2O + polyamine-[polyamine-binding protein]Side 1 = ADP + phosphate + polyamineSide 2 + [polyamine-binding protein]Side 1.. Its function is as follows. Part of the ABC transporter complex PotABCD involved in spermidine/putrescine import. Responsible for energy coupling to the transport system. In Treponema pallidum (strain Nichols), this protein is Spermidine/putrescine import ATP-binding protein PotA.